The primary structure comprises 385 residues: S-adenosylmethionine synthase (385 aa).

Residue His-15 coordinates ATP. A Mg(2+)-binding site is contributed by Asp-17. Glu-43 contributes to the K(+) binding site. The L-methionine site is built by Glu-56 and Gln-99. The segment at 99–109 (QSPEIAQGVDE) is flexible loop. Residues 164–166 (DAK), 230–231 (RF), Asp-239, 245–246 (RK), Ala-262, and Lys-266 each bind ATP. L-methionine is bound at residue Asp-239. Residue Lys-270 participates in L-methionine binding.

It belongs to the AdoMet synthase family. In terms of assembly, homotetramer; dimer of dimers. It depends on Mg(2+) as a cofactor. K(+) serves as cofactor.

The protein resides in the cytoplasm. It carries out the reaction L-methionine + ATP + H2O = S-adenosyl-L-methionine + phosphate + diphosphate. It functions in the pathway amino-acid biosynthesis; S-adenosyl-L-methionine biosynthesis; S-adenosyl-L-methionine from L-methionine: step 1/1. Catalyzes the formation of S-adenosylmethionine (AdoMet) from methionine and ATP. The overall synthetic reaction is composed of two sequential steps, AdoMet formation and the subsequent tripolyphosphate hydrolysis which occurs prior to release of AdoMet from the enzyme. This chain is S-adenosylmethionine synthase, found in Hydrogenovibrio crunogenus (strain DSM 25203 / XCL-2) (Thiomicrospira crunogena).